The following is a 717-amino-acid chain: Delta-1-pyrroline-5-carboxylate synthase A (717 aa).

A glutamate 5-kinase region spans residues M1–R296. Substrate-binding residues include S60, D157, and N176. ATP-binding positions include S196–D197 and R236–K242. A gamma-glutamyl phosphate reductase region spans residues D297 to A717.

This sequence in the N-terminal section; belongs to the glutamate 5-kinase family. The protein in the C-terminal section; belongs to the gamma-glutamyl phosphate reductase family.

The catalysed reaction is L-glutamate + ATP = L-glutamyl 5-phosphate + ADP. It catalyses the reaction L-glutamate 5-semialdehyde + phosphate + NADP(+) = L-glutamyl 5-phosphate + NADPH + H(+). The protein operates within amino-acid biosynthesis; L-proline biosynthesis; L-glutamate 5-semialdehyde from L-glutamate: step 1/2. Its pathway is amino-acid biosynthesis; L-proline biosynthesis; L-glutamate 5-semialdehyde from L-glutamate: step 2/2. Functionally, P5CS plays a key role in proline biosynthesis, leading to osmoregulation in plants. This is Delta-1-pyrroline-5-carboxylate synthase A (P5CSA) from Arabidopsis thaliana (Mouse-ear cress).